The chain runs to 296 residues: Cytidine deaminase (296 aa).

2 CMP/dCMP-type deaminase domains span residues 47–167 and 186–296; these read SQDE…FGPA and ESAD…VDPV. 88–90 is a binding site for substrate; it reads NLE. His-101 serves as a coordination point for Zn(2+). Glu-103 (proton donor) is an active-site residue. Zn(2+) is bound by residues Cys-128 and Cys-131.

It belongs to the cytidine and deoxycytidylate deaminase family. In terms of assembly, homodimer. Zn(2+) serves as cofactor.

The catalysed reaction is cytidine + H2O + H(+) = uridine + NH4(+). The enzyme catalyses 2'-deoxycytidine + H2O + H(+) = 2'-deoxyuridine + NH4(+). Functionally, this enzyme scavenges exogenous and endogenous cytidine and 2'-deoxycytidine for UMP synthesis. The polypeptide is Cytidine deaminase (Shewanella loihica (strain ATCC BAA-1088 / PV-4)).